A 573-amino-acid chain; its full sequence is 60 kDa heat shock protein, mitochondrial (573 aa).

The transit peptide at 1–26 (MLRLPTVLRQMRPVSRALAPHLTRAY) directs the protein to the mitochondrion. K31 is modified (N6-succinyllysine). A phosphoserine mark is found at S67 and S70. K75 provides a ligand contact to ATP. K75 carries the post-translational modification N6-acetyllysine. Position 82 is an N6-acetyllysine; alternate (K82). An N6-succinyllysine; alternate modification is found at K82. K87 bears the N6-acetyllysine mark. The residue at position 90 (Y90) is a Phosphotyrosine. K91 carries the post-translational modification N6-acetyllysine. Residue 111-115 (DGTTT) participates in ATP binding. Residue K125 is modified to N6-acetyllysine; alternate. Position 125 is an N6-succinyllysine; alternate (K125). The residue at position 130 (K130) is an N6-acetyllysine. An N6-acetyllysine; alternate modification is found at K133. K133 is subject to N6-succinyllysine; alternate. K133 carries the post-translational modification N6-malonyllysine; alternate. K156 is modified (N6-acetyllysine). Residues K191, K202, K205, K218, and K236 each carry the N6-acetyllysine; alternate modification. N6-succinyllysine; alternate occurs at positions 191, 202, 205, 218, and 236. Residue K249 is modified to N6-acetyllysine. Position 250 is an N6-acetyllysine; alternate (K250). K250 carries the N6-succinyllysine; alternate modification. K269 and K292 each carry N6-acetyllysine. An N6-succinyllysine modification is found at K301. K314 is modified (N6-acetyllysine). K352 is subject to N6-acetyllysine; alternate. K352 is modified (N6-succinyllysine; alternate). K359 and K389 each carry N6-acetyllysine. N6-acetyllysine; alternate is present on K396. The residue at position 396 (K396) is an N6-succinyllysine; alternate. S410 carries the phosphoserine modification. G440 is an ATP binding site. K455 is modified (N6-acetyllysine; alternate). K455 carries the post-translational modification N6-succinyllysine; alternate. K469 is subject to N6-acetyllysine. K481 carries the post-translational modification N6-acetyllysine; alternate. K481 bears the N6-succinyllysine; alternate mark. S488 carries the phosphoserine modification. Residue D520 participates in ATP binding. Residue K551 forms a Glycyl lysine isopeptide (Lys-Gly) (interchain with G-Cter in SUMO2) linkage.

It belongs to the chaperonin (HSP60) family. Homoheptamer arranged in a ring structure. The functional units of these chaperonins consist of heptameric rings of the large subunit Hsp60, which function as a back-to-back double ring. Interacts with 2 heptameric Hsp10 rings to form the symmetrical football complex. Interacts with HRAS. Interacts with ATAD3A. Interacts with ETFBKMT and EEF1AKMT3. Interacts with MFHAS1.

It localises to the mitochondrion matrix. It carries out the reaction ATP + H2O + a folded polypeptide = ADP + phosphate + an unfolded polypeptide.. Functionally, chaperonin implicated in mitochondrial protein import and macromolecular assembly. Together with Hsp10, facilitates the correct folding of imported proteins. May also prevent misfolding and promote the refolding and proper assembly of unfolded polypeptides generated under stress conditions in the mitochondrial matrix. The functional units of these chaperonins consist of heptameric rings of the large subunit Hsp60, which function as a back-to-back double ring. In a cyclic reaction, Hsp60 ring complexes bind one unfolded substrate protein per ring, followed by the binding of ATP and association with 2 heptameric rings of the co-chaperonin Hsp10. This leads to sequestration of the substrate protein in the inner cavity of Hsp60 where, for a certain period of time, it can fold undisturbed by other cell components. Synchronous hydrolysis of ATP in all Hsp60 subunits results in the dissociation of the chaperonin rings and the release of ADP and the folded substrate protein. This chain is 60 kDa heat shock protein, mitochondrial (HSPD1), found in Cricetulus griseus (Chinese hamster).